A 1325-amino-acid polypeptide reads, in one-letter code: Cyclic nucleotide-gated channel beta-1 (1325 aa).

Disordered stretches follow at residues 1 to 124, 147 to 198, 227 to 279, 340 to 470, 482 to 637, and 659 to 694; these read MLGW…QVAV, PQPV…SLWL, AVLD…PGDP, WEDA…LDSC, LERT…SQNS, and KEKL…PAEA. The Cytoplasmic segment spans residues 1–732; sequence MLGWVQRVLP…SIDPLTNLMY (732 aa). The segment covering 43–81 has biased composition (acidic residues); sequence PQQEPEPEPEPEPEPEPEPEPEPEPEPEPEPEPVPEEAP. The segment covering 105 to 121 has biased composition (polar residues); the sequence is LQETQVADPAQPTSQAQ. Basic and acidic residues predominate over residues 370-379; sequence IPRELTKIQE. 3 stretches are compositionally biased toward acidic residues: residues 380–393, 418–463, and 495–517; these read ERED…EEKE, EEKE…EEEP, and LPEE…EEKK. Over residues 518 to 527 the composition is skewed to basic and acidic residues; it reads EEEVEKKEEG. Pro residues predominate over residues 560–571; the sequence is TLPPPERPPPSP. The interval 633-643 is calmodulin-binding CaM1; it reads ASQNSAIINDR. Residues 733–754 form a helical membrane-spanning segment; it reads ILWLFFVVLAWNWNCWLIPVRW. The Extracellular portion of the chain corresponds to 755–763; that stretch reads AFPYQRADN. Residues 764–785 traverse the membrane as a helical segment; that stretch reads IHFWLLMDYLCDFIYLLDITVF. The Cytoplasmic segment spans residues 786 to 800; it reads QMRLQFVKGGDIITD. The helical transmembrane segment at 801 to 820 threads the bilayer; the sequence is KKEMRNNYLKSRRFKMDLLC. Residues 821-836 are Extracellular-facing; that stretch reads LLPLDFLYLKLGINPL. Residues 837-849 traverse the membrane as a helical segment; sequence LRLPRCLKYMAFF. At 850-861 the chain is on the cytoplasmic side; it reads EFNNRLEAILSK. Residues 862 to 884 traverse the membrane as a helical segment; that stretch reads AYVYRVIRTTAYLLYSLHLNSCL. An ion conduction pathway region spans residues 862 to 961; the sequence is AYVYRVIRTT…IGQMRDVVGA (100 aa). Topologically, residues 885-907 are extracellular; that stretch reads YYWASAFQGIGSTHWVYDGVGNS. 2 consecutive transmembrane segments (helical) span residues 908 to 934 and 935 to 960; these read YIRC…LFEI and VFQL…DVVG. The Cytoplasmic portion of the chain corresponds to 961–1325; it reads AATAGQTYYR…VLEEKKEGAE (365 aa). Positions 964–1040 are C-linker; that stretch reads AGQTYYRSCM…SIVSKVALFQ (77 aa). Positions 1038–1142 are cNMP-binding domain; that stretch reads LFQGCDRQMI…LDKKDLNEIL (105 aa). A cyclic nucleotide-binding domain region spans residues 1044-1160; the sequence is RQMIFDMLKR…LLRKKARRML (117 aa). 3',5'-cyclic GMP-binding residues include Gly-1105, Glu-1106, Ser-1108, Arg-1118, and Thr-1119. A 3',5'-cyclic AMP-binding site is contributed by Arg-1118. The segment at 1224–1230 is calmodulin-binding CaM2; that stretch reads QQQLLEQ. Residues 1226–1250 show a composition bias toward low complexity; it reads QLLEQAKSSQEAGGEEGSGATDQPA. The segment at 1226–1325 is disordered; it reads QLLEQAKSSQ…VLEEKKEGAE (100 aa). Pro residues predominate over residues 1262-1279; the sequence is KPPGPPEPSAQSSPPPAS.

This sequence belongs to the cyclic nucleotide-gated cation channel (TC 1.A.1.5) family. CNGB1 subfamily. Rod outer segments. Olfactory sensory neurons.

It localises to the cell projection. The protein resides in the cilium membrane. The enzyme catalyses Ca(2+)(in) = Ca(2+)(out). It catalyses the reaction Na(+)(in) = Na(+)(out). It carries out the reaction K(+)(in) = K(+)(out). The catalysed reaction is NH4(+)(in) = NH4(+)(out). The enzyme catalyses Rb(+)(in) = Rb(+)(out). It catalyses the reaction Li(+)(in) = Li(+)(out). It carries out the reaction Cs(+)(in) = Cs(+)(out). Pore-forming subunit of the rod cyclic nucleotide-gated channel. Mediates rod photoresponses at dim light converting transient changes in intracellular cGMP levels into electrical signals. In the dark, cGMP levels are high and keep the channel open enabling a steady inward current carried by Na(+) and Ca(2+) ions that leads to membrane depolarization and neurotransmitter release from synaptic terminals. Upon photon absorption cGMP levels decline leading to channel closure and membrane hyperpolarization that ultimately slows neurotransmitter release and signals the presence of light, the end point of the phototransduction cascade. Pore-forming subunit of the olfactory cyclic nucleotide-gated channel. Operates in the cilia of olfactory sensory neurons where chemical stimulation of the odorant is converted to an electrical signal. Mediates odorant-induced cAMP-dependent Ca(2+) influx triggering neuron depolarization. The rise of intracellular Ca(2+) levels potentiates the olfactory response by activating Ca(2+)-dependent Cl(-) channels, but it also serves as a negative feedback signal to desensitize the channel for rapid adaptation to odorants. Conducts cGMP- and cAMP-gated ion currents, with permeability for monovalent and divalent cations. The selectivity for Ca(2+) over Na(+) increases with cGMP concentrations, whereas the selectivity among monovalent ions is independent of the cGMP levels. This is Cyclic nucleotide-gated channel beta-1 from Mus musculus (Mouse).